A 94-amino-acid chain; its full sequence is Lipoate-protein ligase A subunit 2 (94 aa).

As to quaternary structure, heterodimer composed of LplA and LplB.

It catalyses the reaction L-lysyl-[lipoyl-carrier protein] + (R)-lipoate + ATP = N(6)-[(R)-lipoyl]-L-lysyl-[lipoyl-carrier protein] + AMP + diphosphate + H(+). It participates in protein modification; protein lipoylation via exogenous pathway; protein N(6)-(lipoyl)lysine from lipoate: step 1/2. Its pathway is protein modification; protein lipoylation via exogenous pathway; protein N(6)-(lipoyl)lysine from lipoate: step 2/2. Functionally, part of a lipoate-protein ligase complex that catalyzes both the ATP-dependent activation of exogenously supplied lipoate to lipoyl-AMP and the transfer of the activated lipoyl onto the lipoyl domains of lipoate-dependent enzymes. Can also use octanoate as substrate. In Thermoplasma acidophilum (strain ATCC 25905 / DSM 1728 / JCM 9062 / NBRC 15155 / AMRC-C165), this protein is Lipoate-protein ligase A subunit 2 (lplB).